A 139-amino-acid polypeptide reads, in one-letter code: Gene 22 protein (139 aa).

This Mycobacterium phage D29 (Mycobacteriophage D29) protein is Gene 22 protein (22).